The sequence spans 149 residues: ATP synthase epsilon chain (149 aa).

Composition is skewed to basic and acidic residues over residues 99–116 and 123–134; these read DVER…RLEE and RETHEAARDRAR. The disordered stretch occupies residues 99-149; that stretch reads DVERAESAEERAKRRLEEGVQEEERETHEAARDRARNRLRVAMGKVGTRQS.

Belongs to the ATPase epsilon chain family. As to quaternary structure, F-type ATPases have 2 components, CF(1) - the catalytic core - and CF(0) - the membrane proton channel. CF(1) has five subunits: alpha(3), beta(3), gamma(1), delta(1), epsilon(1). CF(0) has three main subunits: a, b and c.

The protein resides in the cell inner membrane. In terms of biological role, produces ATP from ADP in the presence of a proton gradient across the membrane. This chain is ATP synthase epsilon chain, found in Salinibacter ruber (strain DSM 13855 / M31).